The sequence spans 136 residues: Small ribosomal subunit protein eS19 (136 aa).

Lysine 23 is modified (N6-acetyllysine). At arginine 67 the chain carries Omega-N-methylarginine. N6-acetyllysine is present on residues lysine 111 and lysine 115. The segment at 116–136 (DQDGGRKLTPQGQRDLDRIAG) is disordered.

This sequence belongs to the eukaryotic ribosomal protein eS19 family. Component of the small ribosomal subunit. Part of the small subunit (SSU) processome, composed of more than 70 proteins and the RNA chaperone small nucleolar RNA (snoRNA) U3. Interacts with RPS19BP1; the interaction is direct and mediates the integration of RPS19 in state post-A1. Interacts with RPS19BP1.

The protein localises to the cytoplasm. Its subcellular location is the nucleus. It localises to the nucleolus. In terms of biological role, component of the small ribosomal subunit. The ribosome is a large ribonucleoprotein complex responsible for the synthesis of proteins in the cell. Required for pre-rRNA processing and maturation of 40S ribosomal subunits. Part of the small subunit (SSU) processome, first precursor of the small eukaryotic ribosomal subunit. During the assembly of the SSU processome in the nucleolus, many ribosome biogenesis factors, an RNA chaperone and ribosomal proteins associate with the nascent pre-rRNA and work in concert to generate RNA folding, modifications, rearrangements and cleavage as well as targeted degradation of pre-ribosomal RNA by the RNA exosome. The chain is Small ribosomal subunit protein eS19 (RPS19) from Sus scrofa (Pig).